The sequence spans 232 residues: 5'-methylthioadenosine/S-adenosylhomocysteine nucleosidase (232 aa).

Residue E12 is the Proton acceptor of the active site. Substrate is bound by residues G78, V153, and 174–175 (ME). D198 functions as the Proton donor in the catalytic mechanism.

The protein belongs to the PNP/UDP phosphorylase family. MtnN subfamily.

It carries out the reaction S-adenosyl-L-homocysteine + H2O = S-(5-deoxy-D-ribos-5-yl)-L-homocysteine + adenine. It catalyses the reaction S-methyl-5'-thioadenosine + H2O = 5-(methylsulfanyl)-D-ribose + adenine. The enzyme catalyses 5'-deoxyadenosine + H2O = 5-deoxy-D-ribose + adenine. Its pathway is amino-acid biosynthesis; L-methionine biosynthesis via salvage pathway; S-methyl-5-thio-alpha-D-ribose 1-phosphate from S-methyl-5'-thioadenosine (hydrolase route): step 1/2. Functionally, catalyzes the irreversible cleavage of the glycosidic bond in both 5'-methylthioadenosine (MTA) and S-adenosylhomocysteine (SAH/AdoHcy) to adenine and the corresponding thioribose, 5'-methylthioribose and S-ribosylhomocysteine, respectively. Also cleaves 5'-deoxyadenosine, a toxic by-product of radical S-adenosylmethionine (SAM) enzymes, into 5-deoxyribose and adenine. This chain is 5'-methylthioadenosine/S-adenosylhomocysteine nucleosidase, found in Photobacterium profundum (strain SS9).